The following is a 155-amino-acid chain: Ribosomal RNA large subunit methyltransferase H (155 aa).

S-adenosyl-L-methionine-binding positions include Leu-72, Gly-103, and 122–127 (LSDLTL).

It belongs to the RNA methyltransferase RlmH family. In terms of assembly, homodimer.

The protein localises to the cytoplasm. The catalysed reaction is pseudouridine(1915) in 23S rRNA + S-adenosyl-L-methionine = N(3)-methylpseudouridine(1915) in 23S rRNA + S-adenosyl-L-homocysteine + H(+). Specifically methylates the pseudouridine at position 1915 (m3Psi1915) in 23S rRNA. The chain is Ribosomal RNA large subunit methyltransferase H from Polaromonas naphthalenivorans (strain CJ2).